The sequence spans 545 residues: CTP synthase (545 aa).

The segment at 1–266 (MTTNYIFVTG…DDYICKRFSL (266 aa)) is amidoligase domain. S14 lines the CTP pocket. Position 14 (S14) interacts with UTP. ATP-binding positions include 15–20 (SLGKGI) and D72. The Mg(2+) site is built by D72 and E140. CTP-binding positions include 147 to 149 (DIE), 187 to 192 (KTKPTQ), and K223. Residues 187–192 (KTKPTQ) and K223 each bind UTP. 239 to 241 (KDV) serves as a coordination point for ATP. The region spanning 291 to 542 (TIGMVGKYIE…VKAASEHQKR (252 aa)) is the Glutamine amidotransferase type-1 domain. G352 contacts L-glutamine. C379 functions as the Nucleophile; for glutamine hydrolysis in the catalytic mechanism. Residues 380–383 (LGMQ), E403, and R470 each bind L-glutamine. Active-site residues include H515 and E517.

The protein belongs to the CTP synthase family. As to quaternary structure, homotetramer.

It carries out the reaction UTP + L-glutamine + ATP + H2O = CTP + L-glutamate + ADP + phosphate + 2 H(+). It catalyses the reaction L-glutamine + H2O = L-glutamate + NH4(+). The enzyme catalyses UTP + NH4(+) + ATP = CTP + ADP + phosphate + 2 H(+). Its pathway is pyrimidine metabolism; CTP biosynthesis via de novo pathway; CTP from UDP: step 2/2. Its activity is regulated as follows. Allosterically activated by GTP, when glutamine is the substrate; GTP has no effect on the reaction when ammonia is the substrate. The allosteric effector GTP functions by stabilizing the protein conformation that binds the tetrahedral intermediate(s) formed during glutamine hydrolysis. Inhibited by the product CTP, via allosteric rather than competitive inhibition. Functionally, catalyzes the ATP-dependent amination of UTP to CTP with either L-glutamine or ammonia as the source of nitrogen. Regulates intracellular CTP levels through interactions with the four ribonucleotide triphosphates. The chain is CTP synthase from Salmonella schwarzengrund (strain CVM19633).